The following is a 111-amino-acid chain: Large ribosomal subunit protein uL22 (111 aa).

The protein belongs to the universal ribosomal protein uL22 family. As to quaternary structure, part of the 50S ribosomal subunit.

This protein binds specifically to 23S rRNA; its binding is stimulated by other ribosomal proteins, e.g. L4, L17, and L20. It is important during the early stages of 50S assembly. It makes multiple contacts with different domains of the 23S rRNA in the assembled 50S subunit and ribosome. In terms of biological role, the globular domain of the protein is located near the polypeptide exit tunnel on the outside of the subunit, while an extended beta-hairpin is found that lines the wall of the exit tunnel in the center of the 70S ribosome. The polypeptide is Large ribosomal subunit protein uL22 (Xylella fastidiosa (strain M23)).